Reading from the N-terminus, the 908-residue chain is DNA mismatch repair protein MutS (908 aa).

ATP is bound at residue 659 to 666 (GPNMAGKS).

This sequence belongs to the DNA mismatch repair MutS family.

Functionally, this protein is involved in the repair of mismatches in DNA. It is possible that it carries out the mismatch recognition step. This protein has a weak ATPase activity. This is DNA mismatch repair protein MutS from Parvibaculum lavamentivorans (strain DS-1 / DSM 13023 / NCIMB 13966).